A 465-amino-acid chain; its full sequence is Ribulose bisphosphate carboxylase large chain (465 aa).

Residue K4 is modified to N6,N6,N6-trimethyllysine. Residues N113 and T163 each contribute to the substrate site. Catalysis depends on K165, which acts as the Proton acceptor. A substrate-binding site is contributed by K167. Residues K191, D193, and E194 each contribute to the Mg(2+) site. N6-carboxylysine is present on K191. Residue H284 is the Proton acceptor of the active site. Substrate-binding residues include R285, H317, and S369.

The protein belongs to the RuBisCO large chain family. Type I subfamily. In terms of assembly, heterohexadecamer of 8 large chains and 8 small chains; disulfide-linked. The disulfide link is formed within the large subunit homodimers. The cofactor is Mg(2+). In terms of processing, the disulfide bond which can form in the large chain dimeric partners within the hexadecamer appears to be associated with oxidative stress and protein turnover.

It is found in the plastid. The protein localises to the chloroplast. The catalysed reaction is 2 (2R)-3-phosphoglycerate + 2 H(+) = D-ribulose 1,5-bisphosphate + CO2 + H2O. It carries out the reaction D-ribulose 1,5-bisphosphate + O2 = 2-phosphoglycolate + (2R)-3-phosphoglycerate + 2 H(+). RuBisCO catalyzes two reactions: the carboxylation of D-ribulose 1,5-bisphosphate, the primary event in carbon dioxide fixation, as well as the oxidative fragmentation of the pentose substrate in the photorespiration process. Both reactions occur simultaneously and in competition at the same active site. This chain is Ribulose bisphosphate carboxylase large chain, found in Cyrilla racemiflora (Swamp titi).